The chain runs to 426 residues: Target of rapamycin complex 2 subunit AVO2 (426 aa).

ANK repeat units follow at residues 4–33, 39–68, 74–104, 108–137, and 141–171; these read EPSVRLREAIIEGNLLIVKRLLRRNPDLLT, NGWSSLHYASYHGRYLICVYLIQLGHDKHE, KGNTCVHLALMKGHEQTLHLLLQQFPRFINH, NGRAPIHIACMNDYYQCLSLLIGVGADLWV, and NGDTPLHVCLEYGSISCMKMLLNEGEVSLDD. Residues 259 to 302 form a disordered region; the sequence is STHTTSGNGGNRRSSITNPVFNPRKPTLSTDSFSSSSNSSSRLR. Residues 260–278 are compositionally biased toward polar residues; it reads THTTSGNGGNRRSSITNPV. Low complexity predominate over residues 285 to 302; that stretch reads TLSTDSFSSSSNSSSRLR. 2 positions are modified to phosphoserine: Ser315 and Ser350. The segment covering 350–359 has biased composition (polar residues); sequence SNDNVRGDSQ. A disordered region spans residues 350–392; the sequence is SNDNVRGDSQTATINDDGGGGNGGDATIGMGLRKDPDDENENK. Residues 366 to 375 show a composition bias toward gly residues; the sequence is DGGGGNGGDA. Residues 381 to 392 show a composition bias toward basic and acidic residues; the sequence is LRKDPDDENENK.

In terms of assembly, the target of rapamycin complex 2 (TORC2) is composed of at least AVO1, AVO2, BIT61, LST8, TOR2 and TSC11. TORC2 forms a homodimer. Contrary to TORC1, TORC2 does not bind to and is not sensitive to FKBP-rapamycin. AVO2 is peripherally associated to AVO1 and TSC11.

The protein resides in the cell membrane. It localises to the vacuole membrane. In terms of biological role, component of TORC2, which regulates cell cycle-dependent polarization of the actin-cytoskeleton and cell wall integrity. TORC2 controls polarity of the actin cytoskeleton, which is required for orienting the secretory pathway toward discrete growth sites, via the RHO1/PKC1/MAPK cell integrity pathway. In Saccharomyces cerevisiae (strain ATCC 204508 / S288c) (Baker's yeast), this protein is Target of rapamycin complex 2 subunit AVO2 (AVO2).